The chain runs to 290 residues: 4-hydroxy-tetrahydrodipicolinate synthase (290 aa).

Thr45 provides a ligand contact to pyruvate. The active-site Proton donor/acceptor is Tyr133. The active-site Schiff-base intermediate with substrate is the Lys161. Residue Ile202 coordinates pyruvate.

It belongs to the DapA family. Homotetramer; dimer of dimers.

It localises to the cytoplasm. It carries out the reaction L-aspartate 4-semialdehyde + pyruvate = (2S,4S)-4-hydroxy-2,3,4,5-tetrahydrodipicolinate + H2O + H(+). Its pathway is amino-acid biosynthesis; L-lysine biosynthesis via DAP pathway; (S)-tetrahydrodipicolinate from L-aspartate: step 3/4. Functionally, catalyzes the condensation of (S)-aspartate-beta-semialdehyde [(S)-ASA] and pyruvate to 4-hydroxy-tetrahydrodipicolinate (HTPA). This is 4-hydroxy-tetrahydrodipicolinate synthase from Alkalilimnicola ehrlichii (strain ATCC BAA-1101 / DSM 17681 / MLHE-1).